The chain runs to 357 residues: Guanine nucleotide-binding protein G(o) subunit alpha (357 aa).

Gly-2 carries N-myristoyl glycine lipidation. Cys-3 carries S-palmitoyl cysteine lipidation. Residues 32–357 (KDIKLLLLGA…ANNLRGCGLY (326 aa)) enclose the G-alpha domain. The G1 motif stretch occupies residues 35 to 48 (KLLLLGAGESGKST). GTP contacts are provided by residues 40-47 (GAGESGKS), 179-185 (LRTRVKT), 204-208 (DVGGQ), 273-276 (NKKD), and Ala-329. Ser-47 and Thr-185 together coordinate Mg(2+). The tract at residues 177 to 185 (DILRTRVKT) is G2 motif. The G3 motif stretch occupies residues 200 to 209 (FKLFDVGGQR). A G4 motif region spans residues 269 to 276 (ILFLNKKD). The tract at residues 327 to 332 (TCATDT) is G5 motif.

This sequence belongs to the G-alpha family. G(i/o/t/z) subfamily. As to quaternary structure, g proteins are composed of 3 units; alpha, beta and gamma. The alpha chain contains the guanine nucleotide binding site.

Its function is as follows. Guanine nucleotide-binding proteins (G proteins) are involved as modulators or transducers in various transmembrane signaling systems. The G(o) protein function is not clear. This is Guanine nucleotide-binding protein G(o) subunit alpha (SCGOA) from Mizuhopecten yessoensis (Japanese scallop).